Here is a 412-residue protein sequence, read N- to C-terminus: ATP phosphoribosyltransferase regulatory subunit (412 aa).

Belongs to the class-II aminoacyl-tRNA synthetase family. HisZ subfamily. As to quaternary structure, heteromultimer composed of HisG and HisZ subunits.

It is found in the cytoplasm. Its pathway is amino-acid biosynthesis; L-histidine biosynthesis; L-histidine from 5-phospho-alpha-D-ribose 1-diphosphate: step 1/9. In terms of biological role, required for the first step of histidine biosynthesis. May allow the feedback regulation of ATP phosphoribosyltransferase activity by histidine. The polypeptide is ATP phosphoribosyltransferase regulatory subunit (Dehalococcoides mccartyi (strain CBDB1)).